A 261-amino-acid chain; its full sequence is Cytochrome c oxidase subunit 3 (261 aa).

Residues 1–15 are Mitochondrial matrix-facing; the sequence is MAHQAHAYHMVDPSP. Residues 16–34 form a helical membrane-spanning segment; sequence WPLTGAIAALLLTSGTAVW. Residues 35 to 40 lie on the Mitochondrial intermembrane side of the membrane; it reads FHFHSL. Residues 41-66 traverse the membrane as a helical segment; sequence TLLTMGNILLLLTMYQWWRDIIREGT. Topologically, residues 67–72 are mitochondrial matrix; that stretch reads FQGHHT. A helical transmembrane segment spans residues 73–105; it reads PPVQKGLRYGMILFITSEVFFFLGFFWAFYHSS. Topologically, residues 106–128 are mitochondrial intermembrane; the sequence is LSPTPELGGCWPPTGIITLDPFE. A helical membrane pass occupies residues 129 to 152; that stretch reads VPLLNTAVLLASGVTVTWAHHSIM. Topologically, residues 153-155 are mitochondrial matrix; it reads EGE. The chain crosses the membrane as a helical span at residues 156 to 183; it reads RKQTIQALTLTILLGFYFTFLQGMEYYE. Residues 184–190 lie on the Mitochondrial intermembrane side of the membrane; it reads APFTIAD. The chain crosses the membrane as a helical span at residues 191 to 223; the sequence is GVYGSTFFVATGFHGLHVIIGSTFLAICLLRQI. The Mitochondrial matrix segment spans residues 224–232; that stretch reads QYHFTSEHH. The chain crosses the membrane as a helical span at residues 233 to 256; sequence FGFEAAAWYWHFVDVVWLFLYVSI. At 257 to 261 the chain is on the mitochondrial intermembrane side; sequence YWWGS.

It belongs to the cytochrome c oxidase subunit 3 family. Component of the cytochrome c oxidase (complex IV, CIV), a multisubunit enzyme composed of 14 subunits. The complex is composed of a catalytic core of 3 subunits MT-CO1, MT-CO2 and MT-CO3, encoded in the mitochondrial DNA, and 11 supernumerary subunits COX4I, COX5A, COX5B, COX6A, COX6B, COX6C, COX7A, COX7B, COX7C, COX8 and NDUFA4, which are encoded in the nuclear genome. The complex exists as a monomer or a dimer and forms supercomplexes (SCs) in the inner mitochondrial membrane with NADH-ubiquinone oxidoreductase (complex I, CI) and ubiquinol-cytochrome c oxidoreductase (cytochrome b-c1 complex, complex III, CIII), resulting in different assemblies (supercomplex SCI(1)III(2)IV(1) and megacomplex MCI(2)III(2)IV(2)).

The protein resides in the mitochondrion inner membrane. The catalysed reaction is 4 Fe(II)-[cytochrome c] + O2 + 8 H(+)(in) = 4 Fe(III)-[cytochrome c] + 2 H2O + 4 H(+)(out). In terms of biological role, component of the cytochrome c oxidase, the last enzyme in the mitochondrial electron transport chain which drives oxidative phosphorylation. The respiratory chain contains 3 multisubunit complexes succinate dehydrogenase (complex II, CII), ubiquinol-cytochrome c oxidoreductase (cytochrome b-c1 complex, complex III, CIII) and cytochrome c oxidase (complex IV, CIV), that cooperate to transfer electrons derived from NADH and succinate to molecular oxygen, creating an electrochemical gradient over the inner membrane that drives transmembrane transport and the ATP synthase. Cytochrome c oxidase is the component of the respiratory chain that catalyzes the reduction of oxygen to water. Electrons originating from reduced cytochrome c in the intermembrane space (IMS) are transferred via the dinuclear copper A center (CU(A)) of subunit 2 and heme A of subunit 1 to the active site in subunit 1, a binuclear center (BNC) formed by heme A3 and copper B (CU(B)). The BNC reduces molecular oxygen to 2 water molecules using 4 electrons from cytochrome c in the IMS and 4 protons from the mitochondrial matrix. This is Cytochrome c oxidase subunit 3 (mt-co3) from Salmo salar (Atlantic salmon).